A 201-amino-acid chain; its full sequence is Protein CD300H (201 aa).

The first 24 residues, 1–24 (MTQRAGAAMLPSALLLLCVPGCLT), serve as a signal peptide directing secretion. The Ig-like V-type domain maps to 25-123 (VSGPSTVMGA…ATILQEDGLS (99 aa)). Topologically, residues 25 to 168 (VSGPSTVMGA…CQGSLPSSTC (144 aa)) are extracellular. C43 and C111 are joined by a disulfide. Residue N100 is glycosylated (N-linked (GlcNAc...) asparagine). The chain crosses the membrane as a helical span at residues 169–189 (FLLLPLLKVPLLLSILGAILW). The Cytoplasmic portion of the chain corresponds to 190–201 (VNRPWRTPWTES).

This sequence belongs to the CD300 family. As to quaternary structure, interacts with TYROBP and HCST. As to expression, expressed on CD16+ monocytes and myeloid dendritic cells (at protein level). By contrast, not detected in lymphocytes nor granulocytes (at protein level).

The protein resides in the membrane. It localises to the secreted. In terms of biological role, may play an important role in innate immunity by mediating a signal for the production of a neutrophil chemoattractant. This chain is Protein CD300H, found in Homo sapiens (Human).